A 271-amino-acid chain; its full sequence is Digeranylgeranylglyceryl phosphate synthase (271 aa).

The next 8 helical transmembrane spans lie at 11–31 (INCA…GARL), 33–53 (VGAV…NAIN), 88–108 (FAVG…IAAL), 125–145 (LIGN…GAAV), 149–169 (PAPA…REIL), 201–221 (VFAI…VVGW), 224–244 (LVLA…AVAG), and 251–271 (AQRV…ASLL).

It belongs to the UbiA prenyltransferase family. DGGGP synthase subfamily. Mg(2+) is required as a cofactor.

Its subcellular location is the cell membrane. It carries out the reaction sn-3-O-(geranylgeranyl)glycerol 1-phosphate + (2E,6E,10E)-geranylgeranyl diphosphate = 2,3-bis-O-(geranylgeranyl)-sn-glycerol 1-phosphate + diphosphate. Its pathway is membrane lipid metabolism; glycerophospholipid metabolism. Prenyltransferase that catalyzes the transfer of the geranylgeranyl moiety of geranylgeranyl diphosphate (GGPP) to the C2 hydroxyl of (S)-3-O-geranylgeranylglyceryl phosphate (GGGP). This reaction is the second ether-bond-formation step in the biosynthesis of archaeal membrane lipids. In Methanopyrus kandleri (strain AV19 / DSM 6324 / JCM 9639 / NBRC 100938), this protein is Digeranylgeranylglyceryl phosphate synthase.